Reading from the N-terminus, the 227-residue chain is Phosphoglycolate phosphatase (227 aa).

The active-site Nucleophile is aspartate 9. Residues aspartate 9, aspartate 11, and aspartate 171 each coordinate Mg(2+).

This sequence belongs to the HAD-like hydrolase superfamily. CbbY/CbbZ/Gph/YieH family. The cofactor is Mg(2+).

It carries out the reaction 2-phosphoglycolate + H2O = glycolate + phosphate. The protein operates within organic acid metabolism; glycolate biosynthesis; glycolate from 2-phosphoglycolate: step 1/1. Specifically catalyzes the dephosphorylation of 2-phosphoglycolate. Is involved in the dissimilation of the intracellular 2-phosphoglycolate formed during the DNA repair of 3'-phosphoglycolate ends, a major class of DNA lesions induced by oxidative stress. The polypeptide is Phosphoglycolate phosphatase (Mesorhizobium japonicum (strain LMG 29417 / CECT 9101 / MAFF 303099) (Mesorhizobium loti (strain MAFF 303099))).